The sequence spans 265 residues: Methylthioribulose-1-phosphate dehydratase (265 aa).

Cys118 lines the substrate pocket. 2 residues coordinate Zn(2+): His136 and His138. Glu161 (proton donor/acceptor) is an active-site residue. His226 provides a ligand contact to Zn(2+).

Belongs to the aldolase class II family. MtnB subfamily. Requires Zn(2+) as cofactor.

Its subcellular location is the cytoplasm. It carries out the reaction 5-(methylsulfanyl)-D-ribulose 1-phosphate = 5-methylsulfanyl-2,3-dioxopentyl phosphate + H2O. Its pathway is amino-acid biosynthesis; L-methionine biosynthesis via salvage pathway; L-methionine from S-methyl-5-thio-alpha-D-ribose 1-phosphate: step 2/6. Functionally, catalyzes the dehydration of methylthioribulose-1-phosphate (MTRu-1-P) into 2,3-diketo-5-methylthiopentyl-1-phosphate (DK-MTP-1-P). The chain is Methylthioribulose-1-phosphate dehydratase from Scheffersomyces stipitis (strain ATCC 58785 / CBS 6054 / NBRC 10063 / NRRL Y-11545) (Yeast).